The sequence spans 120 residues: Nitrogen regulatory protein GlnK3 (120 aa).

Residues threonine 40 and 48–50 (GEQ) each bind ADP. Residues threonine 40 and 48-50 (GEQ) contribute to the ATP site. 2-oxoglutarate is bound by residues 48–52 (GEQKG) and lysine 69. ADP contacts are provided by residues valine 75 and 98-101 (GDGR). ATP is bound by residues valine 75 and 98–101 (GDGR). Glycine 98 contacts 2-oxoglutarate.

The protein belongs to the P(II) protein family. Homotrimer. Interacts and forms a complex with Amt3.

It localises to the cytoplasm. With respect to regulation, activity is influenced by intracellular pools of the effector molecules ATP, ADP and 2-oxoglutarate. It senses the cellular nitrogen status through 2-oxoglutarate, and the energy level of the cell by binding both ATP and ADP with different affinities. ATP and 2-oxoglutarate prohibit binding to Amt3. ADP promotes the complex formation. Its function is as follows. Involved in the regulation of nitrogen metabolism. Regulates the activity of its targets by protein-protein interaction in response to the nitrogen status of the cell. Regulates the activity of the ammonia channel Amt3 via direct interaction. In Archaeoglobus fulgidus (strain ATCC 49558 / DSM 4304 / JCM 9628 / NBRC 100126 / VC-16), this protein is Nitrogen regulatory protein GlnK3.